A 396-amino-acid chain; its full sequence is Cellular tumor antigen p53 (396 aa).

The segment at 1–44 (MADLAENVSLPLSQESFEDLWKMNLNLVAVQPPETESWVGYDNF) is transcription activation (acidic). Positions 63 to 89 (ATEPAPQPSISTLDTGSPPTSTVPTTS) are disordered. Positions 77 to 89 (TGSPPTSTVPTTS) are enriched in low complexity. Residues 90–281 (DYPGALGFQL…KTEEINLKKQ (192 aa)) mediate DNA binding. 4 residues coordinate Zn(2+): Cys164, His167, Cys227, and Cys231. The interval 262-269 (RVCACPGR) is interaction with DNA. The short motif at 297–317 (KRAMKEASLPAPQPGASKKTK) is the Bipartite nuclear localization signal element. Residues 301–322 (KEASLPAPQPGASKKTKSSPAV) are disordered. The interval 325–356 (DEIYTLQIRGKEKYEMLKKFNDSLELSELVPV) is oligomerization. A Nuclear export signal motif is present at residues 339 to 350 (EMLKKFNDSLEL). The segment at 369 to 392 (KRVAKRDFGVGPKKRKKLLVKEEK) is basic (repression of DNA-binding).

Belongs to the p53 family. Binds DNA as a homotetramer. The cofactor is Zn(2+).

It is found in the cytoplasm. The protein localises to the nucleus. In terms of biological role, multifunctional transcription factor that induces cell cycle arrest, DNA repair or apoptosis upon binding to its target DNA sequence. Acts as a tumor suppressor in many tumor types; induces growth arrest or apoptosis depending on the physiological circumstances and cell type. Negatively regulates cell division by controlling expression of a set of genes required for this process. One of the activated genes is an inhibitor of cyclin-dependent kinases. Apoptosis induction seems to be mediated either by stimulation of BAX and FAS antigen expression, or by repression of Bcl-2 expression. This Oncorhynchus mykiss (Rainbow trout) protein is Cellular tumor antigen p53 (tp53).